Here is a 1009-residue protein sequence, read N- to C-terminus: Type VII secretion system accessory factor EsaA (1009 aa).

A run of 6 helical transmembrane segments spans residues 7 to 27 (IYALIVTLIIIIAIVSMIFFV), 822 to 842 (ISPTLFVLLMYLLSMITAYIF), 869 to 889 (VITSGVIGTTGLVEGLIVGLI), 903 to 923 (KFILMVILTMMVFVLINTYLL), 928 to 948 (SIGMFLMIAALGLYFVAMNNL), and 979 to 999 (IGLALVILTVLVIIGFVLNMF).

Belongs to the EsaA family. As to quaternary structure, homodimer. Interacts with EssB.

It is found in the cell membrane. Functionally, component of the type VII secretion system (Ess). Provides together with EssB and other components such as EssC and EssE a secretion platform across the cytoplasmic membrane in the host. This chain is Type VII secretion system accessory factor EsaA, found in Staphylococcus aureus (strain MSSA476).